The chain runs to 285 residues: NAD kinase (285 aa).

Asp-66 acts as the Proton acceptor in catalysis. NAD(+)-binding positions include 66–67 (DG), 137–138 (ND), Arg-148, Arg-165, Asp-167, and 178–183 (TAYSMS).

It belongs to the NAD kinase family. A divalent metal cation serves as cofactor.

Its subcellular location is the cytoplasm. It carries out the reaction NAD(+) + ATP = ADP + NADP(+) + H(+). Functionally, involved in the regulation of the intracellular balance of NAD and NADP, and is a key enzyme in the biosynthesis of NADP. Catalyzes specifically the phosphorylation on 2'-hydroxyl of the adenosine moiety of NAD to yield NADP. This is NAD kinase from Chlorobium luteolum (strain DSM 273 / BCRC 81028 / 2530) (Pelodictyon luteolum).